A 155-amino-acid chain; its full sequence is SsrA-binding protein (155 aa).

This sequence belongs to the SmpB family.

Its subcellular location is the cytoplasm. Required for rescue of stalled ribosomes mediated by trans-translation. Binds to transfer-messenger RNA (tmRNA), required for stable association of tmRNA with ribosomes. tmRNA and SmpB together mimic tRNA shape, replacing the anticodon stem-loop with SmpB. tmRNA is encoded by the ssrA gene; the 2 termini fold to resemble tRNA(Ala) and it encodes a 'tag peptide', a short internal open reading frame. During trans-translation Ala-aminoacylated tmRNA acts like a tRNA, entering the A-site of stalled ribosomes, displacing the stalled mRNA. The ribosome then switches to translate the ORF on the tmRNA; the nascent peptide is terminated with the 'tag peptide' encoded by the tmRNA and targeted for degradation. The ribosome is freed to recommence translation, which seems to be the essential function of trans-translation. The chain is SsrA-binding protein from Oenococcus oeni (strain ATCC BAA-331 / PSU-1).